Here is an 81-residue protein sequence, read N- to C-terminus: ATP synthase subunit c, chloroplastic (81 aa).

The next 2 helical transmembrane spans lie at 4 to 24 (VISA…SIGP) and 57 to 77 (LAFM…LLFA).

It belongs to the ATPase C chain family. As to quaternary structure, F-type ATPases have 2 components, F(1) - the catalytic core - and F(0) - the membrane proton channel. F(1) has five subunits: alpha(3), beta(3), gamma(1), delta(1), epsilon(1). F(0) has four main subunits: a(1), b(1), b'(1) and c(10-14). The alpha and beta chains form an alternating ring which encloses part of the gamma chain. F(1) is attached to F(0) by a central stalk formed by the gamma and epsilon chains, while a peripheral stalk is formed by the delta, b and b' chains.

It localises to the plastid. Its subcellular location is the chloroplast thylakoid membrane. F(1)F(0) ATP synthase produces ATP from ADP in the presence of a proton or sodium gradient. F-type ATPases consist of two structural domains, F(1) containing the extramembraneous catalytic core and F(0) containing the membrane proton channel, linked together by a central stalk and a peripheral stalk. During catalysis, ATP synthesis in the catalytic domain of F(1) is coupled via a rotary mechanism of the central stalk subunits to proton translocation. In terms of biological role, key component of the F(0) channel; it plays a direct role in translocation across the membrane. A homomeric c-ring of between 10-14 subunits forms the central stalk rotor element with the F(1) delta and epsilon subunits. This chain is ATP synthase subunit c, chloroplastic, found in Zygnema circumcarinatum (Green alga).